The chain runs to 272 residues: 2-C-methyl-D-erythritol 4-phosphate cytidylyltransferase (272 aa).

This sequence belongs to the IspD/TarI cytidylyltransferase family. IspD subfamily.

The enzyme catalyses 2-C-methyl-D-erythritol 4-phosphate + CTP + H(+) = 4-CDP-2-C-methyl-D-erythritol + diphosphate. The protein operates within isoprenoid biosynthesis; isopentenyl diphosphate biosynthesis via DXP pathway; isopentenyl diphosphate from 1-deoxy-D-xylulose 5-phosphate: step 2/6. In terms of biological role, catalyzes the formation of 4-diphosphocytidyl-2-C-methyl-D-erythritol from CTP and 2-C-methyl-D-erythritol 4-phosphate (MEP). The sequence is that of 2-C-methyl-D-erythritol 4-phosphate cytidylyltransferase from Xanthomonas oryzae pv. oryzae (strain MAFF 311018).